The following is a 95-amino-acid chain: Large ribosomal subunit protein uL23 (95 aa).

Belongs to the universal ribosomal protein uL23 family. Part of the 50S ribosomal subunit. Contacts protein L29, and trigger factor when it is bound to the ribosome.

One of the early assembly proteins it binds 23S rRNA. One of the proteins that surrounds the polypeptide exit tunnel on the outside of the ribosome. Forms the main docking site for trigger factor binding to the ribosome. The sequence is that of Large ribosomal subunit protein uL23 from Syntrophotalea carbinolica (strain DSM 2380 / NBRC 103641 / GraBd1) (Pelobacter carbinolicus).